The following is a 508-amino-acid chain: Amphoterin-induced protein 3 (508 aa).

The N-terminal stretch at 1–19 (MAWLVLLGLLLCMLGAGSG) is a signal peptide. At 20-383 (TSDLEGVLPP…PRPEPEAFNT (364 aa)) the chain is on the extracellular side. One can recognise an LRRNT domain in the interval 25 to 61 (GVLPPDPHNCPNKCVCAADVLSCAGRGLQDLPAALPA). 2 cysteine pairs are disulfide-bonded: Cys-34/Cys-40 and Cys-38/Cys-47. LRR repeat units follow at residues 62–83 (TAAE…WLAP), 86–107 (RLRA…VFTN), 110–131 (GLRI…DLDG), 134–155 (ELEK…AFQG), 158–178 (MLSH…NHLH), and 184–207 (RLRT…AALP). The N-linked (GlcNAc...) asparagine glycan is linked to Asn-107. The LRRCT domain maps to 219–275 (NPLPCDCSLYHLLRRWHQRGLSALHDFEREYTCLAFKVAESRVRFFEHSRVFKNCSV). 3 cysteine pairs are disulfide-bonded: Cys-223–Cys-251, Cys-225–Cys-273, and Cys-300–Cys-352. 4 N-linked (GlcNAc...) asparagine glycosylation sites follow: Asn-272, Asn-301, Asn-362, and Asn-368. The Ig-like C2-type domain occupies 279 to 370 (PGLELPEEEL…HNQTLEYNVS (92 aa)). Residues 384–404 (GFTTLLGCIVGLVLVLLYLFA) form a helical membrane-spanning segment. The Cytoplasmic segment spans residues 405-508 (PPCRGCCRCC…STGSEGLMMS (104 aa)).

Belongs to the immunoglobulin superfamily. AMIGO family. As to quaternary structure, binds AMIGO1 or AMIGO2.

It is found in the membrane. Functionally, may mediate heterophilic cell-cell interaction. May contribute to signal transduction through its intracellular domain. This is Amphoterin-induced protein 3 from Rattus norvegicus (Rat).